Consider the following 279-residue polypeptide: Epidermal growth factor-like protein 7 (279 aa).

Positions 1 to 21 are cleaved as a signal peptide; the sequence is MWGSGELLVAWFLVLAAGGTT. The EMI domain occupies 28–109; it reads SRRVCTVGVS…TNGLPGACGA (82 aa). 9 disulfide bridges follow: Cys-32–Cys-94, Cys-57–Cys-63, Cys-93–Cys-107, Cys-112–Cys-122, Cys-116–Cys-128, Cys-130–Cys-139, Cys-146–Cys-157, Cys-153–Cys-166, and Cys-168–Cys-181. Residues 108-140 enclose the EGF-like 1 domain; sequence GAAICQPPCGNEGSCIRPGRCRCPVGWQGDTCQ. Positions 131-133 match the Cell attachment site motif; it reads PVG. The 41-residue stretch at 142–182 folds into the EGF-like 2; calcium-binding domain; it reads DVDECSTGEARCPQRCVNTVGSYWCQCWEGQSPSADGVLCL. Coiled-coil stretches lie at residues 200-224 and 250-274; these read SVVR…QLVL and FQQL…GSCS.

As to quaternary structure, interacts with ITGAV/ITGB3 in an RGD-dependent manner, increasing endothelial cell's motility.

Its subcellular location is the secreted. It localises to the extracellular space. Regulates vascular tubulogenesis in vivo. Inhibits platelet-derived growth factor (PDGF)-BB-induced smooth muscle cell migration and promotes endothelial cell adhesion to the extracellular matrix and angiogenesis. The sequence is that of Epidermal growth factor-like protein 7 (Egfl7) from Rattus norvegicus (Rat).